The sequence spans 249 residues: Ribonuclease PH (249 aa).

Residues arginine 90 and 128 to 130 each bind phosphate; that span reads GTR.

Belongs to the RNase PH family. Homohexameric ring arranged as a trimer of dimers.

The catalysed reaction is tRNA(n+1) + phosphate = tRNA(n) + a ribonucleoside 5'-diphosphate. In terms of biological role, phosphorolytic 3'-5' exoribonuclease that plays an important role in tRNA 3'-end maturation. Removes nucleotide residues following the 3'-CCA terminus of tRNAs; can also add nucleotides to the ends of RNA molecules by using nucleoside diphosphates as substrates, but this may not be physiologically important. Probably plays a role in initiation of 16S rRNA degradation (leading to ribosome degradation) during starvation. The chain is Ribonuclease PH from Parasynechococcus marenigrum (strain WH8102).